The primary structure comprises 133 residues: Small ribosomal subunit protein uS9 (133 aa).

Residues 95–113 (GDSKQELKSRGFLTRDPRK) show a composition bias toward basic and acidic residues. Residues 95-133 (GDSKQELKSRGFLTRDPRKKERKKYGHKKARKSFQFSKR) are disordered. The segment covering 114–133 (KERKKYGHKKARKSFQFSKR) has biased composition (basic residues).

The protein belongs to the universal ribosomal protein uS9 family.

This Chlamydia felis (strain Fe/C-56) (Chlamydophila felis) protein is Small ribosomal subunit protein uS9.